The following is a 63-amino-acid chain: Small ribosomal subunit protein bS21 (63 aa).

Belongs to the bacterial ribosomal protein bS21 family.

This chain is Small ribosomal subunit protein bS21, found in Porphyromonas gingivalis (strain ATCC BAA-308 / W83).